The sequence spans 1089 residues: Probable transport protein MmpL8 (1089 aa).

The disordered stretch occupies residues 1–26; the sequence is MCDVLMQPVRTPRPSTNLRSKPLRPT. Transmembrane regions (helical) follow at residues 44 to 64, 222 to 242, 257 to 277, 316 to 336, 349 to 369, 400 to 420, 555 to 575, 874 to 894, 898 to 918, 930 to 950, 973 to 993, and 996 to 1016; these read WVVI…VPSL, ITIL…TMVL, LVAI…IFMS, IGKV…GMVF, LGIS…ALMV, KTHL…AGLA, AIST…LLGG, IIAM…RAIV, YLIG…VIVF, IPGL…MLLI, GGVI…LVFA, and GSVV…TFLV. The tract at residues 1056–1078 is disordered; sequence RTKRKPLLPKEEEEQSPPDDDDL. Residues 1066 to 1078 show a composition bias toward acidic residues; the sequence is EEEEQSPPDDDDL.

Belongs to the resistance-nodulation-cell division (RND) (TC 2.A.6) family. MmpL subfamily.

It is found in the cell membrane. The protein is Probable transport protein MmpL8 (mmpL8) of Mycobacterium bovis (strain ATCC BAA-935 / AF2122/97).